The following is a 151-amino-acid chain: D-aminoacyl-tRNA deacylase (151 aa).

The Gly-cisPro motif, important for rejection of L-amino acids signature appears at 136–137 (GP).

The protein belongs to the DTD family. In terms of assembly, homodimer.

The protein resides in the cytoplasm. The catalysed reaction is glycyl-tRNA(Ala) + H2O = tRNA(Ala) + glycine + H(+). It catalyses the reaction a D-aminoacyl-tRNA + H2O = a tRNA + a D-alpha-amino acid + H(+). In terms of biological role, an aminoacyl-tRNA editing enzyme that deacylates mischarged D-aminoacyl-tRNAs. Also deacylates mischarged glycyl-tRNA(Ala), protecting cells against glycine mischarging by AlaRS. Acts via tRNA-based rather than protein-based catalysis; rejects L-amino acids rather than detecting D-amino acids in the active site. By recycling D-aminoacyl-tRNA to D-amino acids and free tRNA molecules, this enzyme counteracts the toxicity associated with the formation of D-aminoacyl-tRNA entities in vivo and helps enforce protein L-homochirality. The polypeptide is D-aminoacyl-tRNA deacylase (Lactococcus lactis subsp. cremoris (strain MG1363)).